The sequence spans 83 residues: Conotoxin Pu6.1 (83 aa).

Residues methionine 1–glycine 19 form the signal peptide. A propeptide spanning residues alanine 20 to proline 42 is cleaved from the precursor. 3 disulfide bridges follow: cysteine 43–cysteine 57, cysteine 50–cysteine 62, and cysteine 56–cysteine 78.

The protein belongs to the conotoxin I3 superfamily. As to expression, expressed by the venom duct.

It localises to the secreted. In Conus pulicarius (Flea-bitten cone), this protein is Conotoxin Pu6.1.